A 510-amino-acid chain; its full sequence is 2,3-bisphosphoglycerate-independent phosphoglycerate mutase (510 aa).

2 residues coordinate Mn(2+): aspartate 12 and serine 62. Serine 62 (phosphoserine intermediate) is an active-site residue. Residues histidine 123, arginine 153–aspartate 154, arginine 185, arginine 191, arginine 260–arginine 263, and lysine 333 each bind substrate. Residues aspartate 400, histidine 404, aspartate 441, histidine 442, and histidine 460 each contribute to the Mn(2+) site.

The protein belongs to the BPG-independent phosphoglycerate mutase family. Monomer. The cofactor is Mn(2+).

It carries out the reaction (2R)-2-phosphoglycerate = (2R)-3-phosphoglycerate. The protein operates within carbohydrate degradation; glycolysis; pyruvate from D-glyceraldehyde 3-phosphate: step 3/5. Functionally, catalyzes the interconversion of 2-phosphoglycerate and 3-phosphoglycerate. This Clostridium acetobutylicum (strain ATCC 824 / DSM 792 / JCM 1419 / IAM 19013 / LMG 5710 / NBRC 13948 / NRRL B-527 / VKM B-1787 / 2291 / W) protein is 2,3-bisphosphoglycerate-independent phosphoglycerate mutase.